The sequence spans 423 residues: Histidine--tRNA ligase 2 (423 aa).

Belongs to the class-II aminoacyl-tRNA synthetase family. In terms of assembly, homodimer.

The protein localises to the cytoplasm. It carries out the reaction tRNA(His) + L-histidine + ATP = L-histidyl-tRNA(His) + AMP + diphosphate + H(+). This Bacillus cereus (strain ATCC 14579 / DSM 31 / CCUG 7414 / JCM 2152 / NBRC 15305 / NCIMB 9373 / NCTC 2599 / NRRL B-3711) protein is Histidine--tRNA ligase 2.